A 185-amino-acid polypeptide reads, in one-letter code: Ribosome-recycling factor (185 aa).

It belongs to the RRF family.

It localises to the cytoplasm. In terms of biological role, responsible for the release of ribosomes from messenger RNA at the termination of protein biosynthesis. May increase the efficiency of translation by recycling ribosomes from one round of translation to another. The protein is Ribosome-recycling factor of Clavibacter sepedonicus (Clavibacter michiganensis subsp. sepedonicus).